Here is an 86-residue protein sequence, read N- to C-terminus: MKTILQLLVRAYQLGISPFLGQNCRFYPSCSSYAIEALEEHGALKGSFLATKRLCKCHPWHAGGVDPVPKKSSSKTSTTACGCGHS.

The tract at residues 64–86 is disordered; the sequence is GVDPVPKKSSSKTSTTACGCGHS. The segment covering 70–79 has biased composition (low complexity); sequence KKSSSKTSTT.

The protein belongs to the UPF0161 family.

The protein localises to the cell inner membrane. Its function is as follows. Could be involved in insertion of integral membrane proteins into the membrane. This Janthinobacterium sp. (strain Marseille) (Minibacterium massiliensis) protein is Putative membrane protein insertion efficiency factor.